We begin with the raw amino-acid sequence, 245 residues long: Membrane-associated progesterone-binding protein 4 (245 aa).

A helical transmembrane segment spans residues 6–26 (RFLLSPFVGVTFIVVLVSLYF). A Cytochrome b5 heme-binding domain is found at 39–138 (KRLFSAEELA…RTYTPVGKLV (100 aa)). The segment at 45–138 (EELALYNGTD…RTYTPVGKLV (94 aa)) is steroid-binding.

This sequence belongs to the cytochrome b5 family. MAPR subfamily.

The protein resides in the membrane. The protein is Membrane-associated progesterone-binding protein 4 of Arabidopsis thaliana (Mouse-ear cress).